Reading from the N-terminus, the 250-residue chain is Urease accessory protein UreF (250 aa).

The tract at residues 1–21 is disordered; that stretch reads MDEADPGEAEAAQAEAAQDGA. A compositionally biased stretch (low complexity) spans 9–21; it reads AEAAQAEAAQDGA.

This sequence belongs to the UreF family. In terms of assembly, ureD, UreF and UreG form a complex that acts as a GTP-hydrolysis-dependent molecular chaperone, activating the urease apoprotein by helping to assemble the nickel containing metallocenter of UreC. The UreE protein probably delivers the nickel.

The protein localises to the cytoplasm. Its function is as follows. Required for maturation of urease via the functional incorporation of the urease nickel metallocenter. The chain is Urease accessory protein UreF from Methylobacterium sp. (strain 4-46).